The sequence spans 394 residues: Chorismate synthase (394 aa).

Positions 42 and 48 each coordinate NADP(+). Residues 137–139 (RAS), 258–259 (QA), glycine 302, 317–321 (KPIAT), and arginine 343 contribute to the FMN site.

It belongs to the chorismate synthase family. Homotetramer. FMNH2 serves as cofactor.

It carries out the reaction 5-O-(1-carboxyvinyl)-3-phosphoshikimate = chorismate + phosphate. The protein operates within metabolic intermediate biosynthesis; chorismate biosynthesis; chorismate from D-erythrose 4-phosphate and phosphoenolpyruvate: step 7/7. Functionally, catalyzes the anti-1,4-elimination of the C-3 phosphate and the C-6 proR hydrogen from 5-enolpyruvylshikimate-3-phosphate (EPSP) to yield chorismate, which is the branch point compound that serves as the starting substrate for the three terminal pathways of aromatic amino acid biosynthesis. This reaction introduces a second double bond into the aromatic ring system. This is Chorismate synthase from Streptomyces avermitilis (strain ATCC 31267 / DSM 46492 / JCM 5070 / NBRC 14893 / NCIMB 12804 / NRRL 8165 / MA-4680).